The following is a 161-amino-acid chain: Allophycocyanin alpha chain (161 aa).

N4-methylasparagine is present on asparagine 71. Cysteine 81 is a (2R,3E)-phycocyanobilin binding site.

This sequence belongs to the phycobiliprotein family. As to quaternary structure, component of the phycobilisome. Heterodimer of an alpha and a beta chain. Contains one covalently linked phycocyanobilin chromophore.

Its subcellular location is the cellular thylakoid membrane. Its function is as follows. Light-harvesting photosynthetic bile pigment-protein from the phycobiliprotein complex. Allophycocyanin has a maximum absorption at approximately 650 nanometers. The polypeptide is Allophycocyanin alpha chain (apcA) (Arthrospira platensis (Spirulina platensis)).